The following is a 365-amino-acid chain: uncharacterized protein (365 aa).

Disordered regions lie at residues 119–157 (ERSR…QQES), 216–298 (RPPG…DISH), and 313–365 (SHHH…LSVG). The segment covering 326–340 (SDPRIESRDLPERPQ) has biased composition (basic and acidic residues).

This is an uncharacterized protein from Homo sapiens (Human).